Reading from the N-terminus, the 163-residue chain is 2-C-methyl-D-erythritol 2,4-cyclodiphosphate synthase (163 aa).

Residues Asp8 and His10 each coordinate a divalent metal cation. Residues 8–10 (DVH) and 34–35 (HS) each bind 4-CDP-2-C-methyl-D-erythritol 2-phosphate. His42 serves as a coordination point for a divalent metal cation. 4-CDP-2-C-methyl-D-erythritol 2-phosphate-binding positions include 56–58 (DIG), 132–135 (TTTE), Phe139, and Arg142.

Belongs to the IspF family. As to quaternary structure, homotrimer. A divalent metal cation serves as cofactor.

The enzyme catalyses 4-CDP-2-C-methyl-D-erythritol 2-phosphate = 2-C-methyl-D-erythritol 2,4-cyclic diphosphate + CMP. It participates in isoprenoid biosynthesis; isopentenyl diphosphate biosynthesis via DXP pathway; isopentenyl diphosphate from 1-deoxy-D-xylulose 5-phosphate: step 4/6. Functionally, involved in the biosynthesis of isopentenyl diphosphate (IPP) and dimethylallyl diphosphate (DMAPP), two major building blocks of isoprenoid compounds. Catalyzes the conversion of 4-diphosphocytidyl-2-C-methyl-D-erythritol 2-phosphate (CDP-ME2P) to 2-C-methyl-D-erythritol 2,4-cyclodiphosphate (ME-CPP) with a corresponding release of cytidine 5-monophosphate (CMP). The chain is 2-C-methyl-D-erythritol 2,4-cyclodiphosphate synthase from Moorella thermoacetica (strain ATCC 39073 / JCM 9320).